Consider the following 1104-residue polypeptide: Partner and localizer of BRCA2 (1104 aa).

Positions 1–157 are required for its oligomerization and is important for its focal concentration at DNA damage sites; it reads MEELSGKPLS…WEKSSVSQEK (157 aa). Residues 1–195 are interaction with RAD51; it reads MEELSGKPLS…TPVSEKTHLL (195 aa). Residues 1 to 308 are interaction with BRCA1; it reads MEELSGKPLS…RAHGQLPGSP (308 aa). Residues 9-48 adopt a coiled-coil conformation; the sequence is LSYAEKEKLKEKLAFLKKEYSRTLARLQRAKRAEKAKNSK. Residues 39–52 show a composition bias toward basic and acidic residues; that stretch reads KRAEKAKNSKKAIE. Disordered stretches follow at residues 39 to 91, 122 to 157, and 243 to 272; these read KRAE…TGEN, GQLL…SQEK, and PSCT…TQGP. 2 stretches are compositionally biased toward polar residues: residues 59–70 and 138–154; these read EASSQLSHSESI and NTLP…SSVS. At Ser274 the chain carries Phosphoserine. The tract at residues 304-354 is disordered; that stretch reads LPGSPNSCSVNDLTHSNLPANSTPNSKSLKSPSNTVDERNEPLQEDEILGP. Over residues 306 to 338 the composition is skewed to polar residues; it reads GSPNSCSVNDLTHSNLPANSTPNSKSLKSPSNT. Phosphoserine is present on Ser364. Residues 374 to 424 form a chAM (Chromatin-association motif); required for chromatin association, mediates nucleosome association region; that stretch reads SCTMLEGLLFPAEYYVRTTRRMSDCQRKIALEAVIQSHLGVKKKELKKKTK. Disordered stretches follow at residues 417-494 and 581-730; these read KELK…SART and LQRD…TPLP. At Ser432 the chain carries Phosphoserine. Residues 446 to 462 are compositionally biased toward low complexity; sequence TSTGQSSSGSLSQKLLS. Over residues 483–492 the composition is skewed to basic residues; that stretch reads RGHRGKRKSA. A compositionally biased stretch (polar residues) spans 664-713; it reads TLSTEAAQPCSTSQPPLLGDTNSLVNNSKQCNSSACSPKPDTNLQASGRQ. The segment at 693–1104 is required for interaction with POLH and POLH DNA synthesis stimulation; the sequence is QCNSSACSPK…DGNIFIYRYF (412 aa). The segment at 771–1104 is interaction with RAD51 and BRCA2; that stretch reads GNLQLVSELK…DGNIFIYRYF (334 aa). An interaction with RAD51, BRCA2 and POLH region spans residues 771-1104; it reads GNLQLVSELK…DGNIFIYRYF (334 aa). 7 WD repeats span residues 772-833, 835-879, 880-927, 928-970, 976-1027, 1033-1071, and 1073-1104; these read NLQL…WHFT, VPVL…QVLL, KSGD…LMPP, DETV…MHID, SVCH…LLCS, AGRF…LLPP, and SDQS…YRYF.

As to quaternary structure, homooligomer; dissociated upon DNA damage thus allowing association with BRCA1. Oligomerization is essential for its focal accumulation at DNA breaks. Part of a BRCA complex containing BRCA1, BRCA2 and PALB2. Interacts with BRCA1 and this interaction is essential for its function in HRR. Interacts with RAD51AP1 and MORF4L1/MRG15. Component of the homologous recombination repair (HR) complex composed of ERCC5/XPG, BRCA2, PALB2, DSS1 and RAD51. Within the complex, interacts with ERCC5/XPG and BRCA2. Interacts with BRCA2, RAD51C, RAD51 and XRCC3; the interactions are direct and it may serve as a scaffold for a HR complex containing PALB2, BRCA2, RAD51C, RAD51 and XRCC3. Interacts with POLH; the interaction is direct.

The protein localises to the nucleus. Plays a critical role in homologous recombination repair (HRR) through its ability to recruit BRCA2 and RAD51 to DNA breaks. Strongly stimulates the DNA strand-invasion activity of RAD51, stabilizes the nucleoprotein filament against a disruptive BRC3-BRC4 polypeptide and helps RAD51 to overcome the suppressive effect of replication protein A (RPA). Functionally cooperates with RAD51AP1 in promoting of D-loop formation by RAD51. Serves as the molecular scaffold in the formation of the BRCA1-PALB2-BRCA2 complex which is essential for homologous recombination. Via its WD repeats is proposed to scaffold a HR complex containing RAD51C and BRCA2 which is thought to play a role in HR-mediated DNA repair. Essential partner of BRCA2 that promotes the localization and stability of BRCA2. Also enables its recombinational repair and checkpoint functions of BRCA2. May act by promoting stable association of BRCA2 with nuclear structures, allowing BRCA2 to escape the effects of proteasome-mediated degradation. Binds DNA with high affinity for D loop, which comprises single-stranded, double-stranded and branched DNA structures. May play a role in the extension step after strand invasion at replication-dependent DNA double-strand breaks; together with BRCA2 is involved in both POLH localization at collapsed replication forks and DNA polymerization activity. In Mus musculus (Mouse), this protein is Partner and localizer of BRCA2 (Palb2).